We begin with the raw amino-acid sequence, 486 residues long: Probable glycine dehydrogenase (decarboxylating) subunit 2 (486 aa).

Position 273 is an N6-(pyridoxal phosphate)lysine (lysine 273).

Belongs to the GcvP family. C-terminal subunit subfamily. The glycine cleavage system is composed of four proteins: P, T, L and H. In this organism, the P 'protein' is a heterodimer of two subunits. Pyridoxal 5'-phosphate serves as cofactor.

It catalyses the reaction N(6)-[(R)-lipoyl]-L-lysyl-[glycine-cleavage complex H protein] + glycine + H(+) = N(6)-[(R)-S(8)-aminomethyldihydrolipoyl]-L-lysyl-[glycine-cleavage complex H protein] + CO2. The glycine cleavage system catalyzes the degradation of glycine. The P protein binds the alpha-amino group of glycine through its pyridoxal phosphate cofactor; CO(2) is released and the remaining methylamine moiety is then transferred to the lipoamide cofactor of the H protein. In Alkaliphilus oremlandii (strain OhILAs) (Clostridium oremlandii (strain OhILAs)), this protein is Probable glycine dehydrogenase (decarboxylating) subunit 2.